Reading from the N-terminus, the 660-residue chain is DNA topoisomerase I, plasmid (660 aa).

Residues 1-110 (MKLMIIESPG…LRVTFNEITA (110 aa)) enclose the Toprim domain. Mg(2+)-binding residues include Glu7 and Asp79. The Topo IA-type catalytic domain occupies 124–550 (DVKRVAAQEA…KVHDQLNMEL (427 aa)). Residues 158-163 (SAGRVQ) are interaction with DNA. Tyr287 functions as the O-(5'-phospho-DNA)-tyrosine intermediate in the catalytic mechanism. 2 consecutive C4-type zinc fingers follow at residues 563–589 (CQECGKPLRRIPGKNGHFWGCSGYPDC) and 613–643 (CVKCGNPLKHLVKKGKGGYDFWGCSGFKEGC).

The protein belongs to the type IA topoisomerase family. As to quaternary structure, monomer. Mg(2+) is required as a cofactor.

It carries out the reaction ATP-independent breakage of single-stranded DNA, followed by passage and rejoining.. Releases the supercoiling and torsional tension of DNA, which is introduced during the DNA replication and transcription, by transiently cleaving and rejoining one strand of the DNA duplex. Introduces a single-strand break via transesterification at a target site in duplex DNA. The scissile phosphodiester is attacked by the catalytic tyrosine of the enzyme, resulting in the formation of a DNA-(5'-phosphotyrosyl)-enzyme intermediate and the expulsion of a 3'-OH DNA strand. The free DNA strand then undergoes passage around the unbroken strand, thus removing DNA supercoils. Finally, in the religation step, the DNA 3'-OH attacks the covalent intermediate to expel the active-site tyrosine and restore the DNA phosphodiester backbone. This is DNA topoisomerase I, plasmid from Xylella fastidiosa (strain 9a5c).